We begin with the raw amino-acid sequence, 273 residues long: Methylthioribulose-1-phosphate dehydratase (273 aa).

The tract at residues 1–27 (MCPTCPPSAASASSENNNTDNNDHLVL) is disordered. Cysteine 114 lines the substrate pocket. Zn(2+) is bound by residues histidine 132 and histidine 134. The Proton donor/acceptor role is filled by glutamate 168. A Zn(2+)-binding site is contributed by histidine 225.

It belongs to the aldolase class II family. MtnB subfamily. The cofactor is Zn(2+).

The protein resides in the cytoplasm. It carries out the reaction 5-(methylsulfanyl)-D-ribulose 1-phosphate = 5-methylsulfanyl-2,3-dioxopentyl phosphate + H2O. Its pathway is amino-acid biosynthesis; L-methionine biosynthesis via salvage pathway; L-methionine from S-methyl-5-thio-alpha-D-ribose 1-phosphate: step 2/6. In terms of biological role, catalyzes the dehydration of methylthioribulose-1-phosphate (MTRu-1-P) into 2,3-diketo-5-methylthiopentyl-1-phosphate (DK-MTP-1-P). In Sordaria macrospora (strain ATCC MYA-333 / DSM 997 / K(L3346) / K-hell), this protein is Methylthioribulose-1-phosphate dehydratase.